Reading from the N-terminus, the 238-residue chain is Oxidoreductase dmxR7 (238 aa).

The protein belongs to the avfA family.

Its pathway is secondary metabolite biosynthesis. Its function is as follows. Oxidoreductase; part of the gene cluster that mediates the biosynthesis of the dimeric xanthones cryptosporioptides. The pathway begins with the synthesis of atrochrysone thioester by the polyketide synthase dmx-nrPKS. The atrochrysone carboxyl ACP thioesterase dmxR1 then breaks the thioester bond and releases the atrochrysone carboxylic acid from dmx-nrPKS. Atrochrysone carboxylic acid is decarboxylated by the decarboxylase dmxR15, and oxidized by the anthrone oxygenase dmxR16 to yield emodin. Emodin is then reduced to emodin hydroquinone by the oxidoreductase dmxR7. A-ring reduction by the short chain dehydrogenase dmxR18, dehydration by the scytalone dehydratase-like protein dmxR17 and probable spontaneous re-oxidation, results in overall deoxygenation to chrysophanol. Baeyer-Villiger oxidation by the Baeyer-Villiger monooxygenase (BVMO) dmxR6 then yields monodictylactone in equilibrium with monodictyphenone. In the case of the cryptosporioptides biosynthesis, monodictylactone is reduced at C-12 to an alcohol (by the short chain dehydrogenases dmxR12 or dmxR8) and hydroxylated at C-5 by dmxR9, yielding the electron-rich aromatic which could eliminate H(2)O to form the ortho-quinonemethide, followed by tautomerisation to paraquinone and complete the formal reduction to produce the 10-methylgroup. Conjugate addition of C-4a-OH to the resulting paraquinone by the monooxygenase dmxR10 then gives cyclohexadienone, which is then reduced at C-5 by the short chain dehydrogenase dmxR3 to give the dihydroxanthone. The 6,7-epoxide in the cryptosporioptides could be introduced by the cytochrome P450 monooxygenase dmxL3. The highly reducing PKS dmxL2 manufactures butyrate, which is further carboxylated by dmxL1 to form ethylmalonate. It is not yet clear whether the carboxylation occurs while the butyrate is attached to the ACP of dmxL2, but this unusual fungal metabolite could then be esterified to O-5 by the O-acetyltransferase dmxR13. Finally, dimerization performed by dmxR5 gives the observed dimers cryptosporioptides A, B and C as the final products of the pathway. The polypeptide is Oxidoreductase dmxR7 (Cryptosporiopsis sp. (strain 8999)).